An 85-amino-acid polypeptide reads, in one-letter code: MAHKKGQGSSRNGRDSNAQRRGVKVYGGQSIHAGSIIIRQLGTKIHPGNNVGMGKDYTLFSLIDGVVKFERLDKKRKKVSVYATA.

The interval 1–24 (MAHKKGQGSSRNGRDSNAQRRGVK) is disordered.

It belongs to the bacterial ribosomal protein bL27 family.

This is Large ribosomal subunit protein bL27 from Syntrophus aciditrophicus (strain SB).